Reading from the N-terminus, the 541-residue chain is Developmental and secondary metabolism regulator VEL1 (541 aa).

The region spanning 26-220 (NRHLWYQLTV…ADQGCRVRIR (195 aa)) is the Velvet domain. The Nuclear localization signal motif lies at 40-45 (ERARAC). 2 disordered regions span residues 222 to 447 (DVRM…MPTQ) and 464 to 483 (PIEAQTEPLPPPPLLPTGGK). The span at 230–244 (GKGSGYDRREEEYAR) shows a compositional bias: basic and acidic residues. The segment covering 289–298 (APSLPHAPSL) has biased composition (low complexity). Pro residues-rich tracts occupy residues 299 to 314 (PHAPPPPAYDAPPPAA), 345 to 355 (APIPPVTPTGP), and 425 to 439 (SPAPMTPYIAPPAPS). The segment at 444 to 472 (MPTQSSLAPLKIASLVSPLPPIEAQTEPL) is PEST.

It belongs to the velvet family. VeA subfamily. As to quaternary structure, component of the heterotrimeric velvet complex composed of LAE1, VEL1 and VEL2; VEL1 acting as a bridging protein between LAE1 and VEL2.

The protein localises to the nucleus. It localises to the cytoplasm. Component of the velvet transcription factor complex that controls sexual/asexual developmental ratio in response to light, promoting sexual development in the darkness while stimulating asexual sporulation under illumination. The velvet complex acts as a global regulator for secondary metabolite gene expression. Controls the expression of the gliotoxin gene cluster. Plays a key role in mycoparasitism. The polypeptide is Developmental and secondary metabolism regulator VEL1 (Hypocrea virens (strain Gv29-8 / FGSC 10586) (Gliocladium virens)).